We begin with the raw amino-acid sequence, 325 residues long: DNA-directed RNA polymerase subunit alpha (325 aa).

The alpha N-terminal domain (alpha-NTD) stretch occupies residues 1–231 (MQTSLLKPKI…DQLSVFAALE (231 aa)). Positions 246–325 (IDPILLRPVD…ENWPPAGLDK (80 aa)) are alpha C-terminal domain (alpha-CTD).

It belongs to the RNA polymerase alpha chain family. As to quaternary structure, homodimer. The RNAP catalytic core consists of 2 alpha, 1 beta, 1 beta' and 1 omega subunit. When a sigma factor is associated with the core the holoenzyme is formed, which can initiate transcription.

It catalyses the reaction RNA(n) + a ribonucleoside 5'-triphosphate = RNA(n+1) + diphosphate. In terms of biological role, DNA-dependent RNA polymerase catalyzes the transcription of DNA into RNA using the four ribonucleoside triphosphates as substrates. This chain is DNA-directed RNA polymerase subunit alpha, found in Paraburkholderia phytofirmans (strain DSM 17436 / LMG 22146 / PsJN) (Burkholderia phytofirmans).